Here is a 299-residue protein sequence, read N- to C-terminus: tRNA dimethylallyltransferase (299 aa).

Position 5–12 (5–12) interacts with ATP; it reads GPTASGKT. A substrate-binding site is contributed by 7–12; that stretch reads TASGKT. Interaction with substrate tRNA stretches follow at residues 30 to 33, 154 to 158, and 235 to 240; these read DSAL, QRLSR, and RCVGYR.

Belongs to the IPP transferase family. As to quaternary structure, monomer. The cofactor is Mg(2+).

It catalyses the reaction adenosine(37) in tRNA + dimethylallyl diphosphate = N(6)-dimethylallyladenosine(37) in tRNA + diphosphate. Functionally, catalyzes the transfer of a dimethylallyl group onto the adenine at position 37 in tRNAs that read codons beginning with uridine, leading to the formation of N6-(dimethylallyl)adenosine (i(6)A). The polypeptide is tRNA dimethylallyltransferase (Shewanella denitrificans (strain OS217 / ATCC BAA-1090 / DSM 15013)).